We begin with the raw amino-acid sequence, 141 residues long: Ly6/PLAUR domain-containing protein 1 (141 aa).

Residues 1–20 (MWVLGIAATFCGLFWLPGLA) form the signal peptide. Disulfide bonds link cysteine 25/cysteine 54, cysteine 28/cysteine 37, cysteine 46/cysteine 71, cysteine 77/cysteine 100, cysteine 88/cysteine 97, and cysteine 101/cysteine 106. Residues 25–107 (CYQCEEFQLN…ISCCNTPLCN (83 aa)) enclose the UPAR/Ly6 domain. Asparagine 45 carries an N-linked (GlcNAc...) asparagine glycan. Glycine 115 carries GPI-anchor amidated glycine lipidation. Residues 116–141 (SSASAIRPGLLTTLLFFHLALCLAHC) constitute a propeptide, removed in mature form.

As to quaternary structure, interacts with CHRNA4 and nAChRs containing alpha-4:beta-2 (CHRNA4:CHRNB2) and alpha-7 (CHRNA7) subunits. As to expression, preferentially expressed in the nervous system. Expressed in embryonic and postnatal postmitotic central and peripheral neurons including subpopulations of motor neurons, sensory neurons, interneurons and neurons of the autonomous nervous system. Expressed around the growing nerves in the limb bud. Expressed at high levels in specific brain regions such as the prefrontal cortex, amygdala, hippocampus, mediodorsal thalamus, dentate gyrus and specific brainstem nuclei (at protein level).

The protein resides in the cell membrane. In terms of biological role, believed to act as a modulator of nicotinic acetylcholine receptors (nAChRs) activity. In vitro increases receptor desensitization and decreases affinity for ACh of alpha-4:beta-2-containing nAChRs. May play a role in the intracellular trafficking of alpha-4:beta-2 and alpha-7-containing nAChRs and may inhibit their expression at the cell surface. May be involved in the control of anxiety. The polypeptide is Ly6/PLAUR domain-containing protein 1 (Lypd1) (Mus musculus (Mouse)).